Consider the following 310-residue polypeptide: ADP-L-glycero-D-manno-heptose-6-epimerase (310 aa).

NADP(+) contacts are provided by residues 10–11 (FI), 31–32 (DN), K38, K53, 75–79 (EGACS), and N92. Y140 acts as the Proton acceptor in catalysis. Residue K144 participates in NADP(+) binding. N169 serves as a coordination point for substrate. 2 residues coordinate NADP(+): V170 and K178. The active-site Proton acceptor is K178. Substrate is bound by residues S180, H187, 201-204 (FEGS), and R209. K267 carries the N6-acetyllysine modification. Residue Y272 participates in substrate binding.

The protein belongs to the NAD(P)-dependent epimerase/dehydratase family. HldD subfamily. In terms of assembly, homopentamer. Requires NADP(+) as cofactor.

The enzyme catalyses ADP-D-glycero-beta-D-manno-heptose = ADP-L-glycero-beta-D-manno-heptose. Its pathway is nucleotide-sugar biosynthesis; ADP-L-glycero-beta-D-manno-heptose biosynthesis; ADP-L-glycero-beta-D-manno-heptose from D-glycero-beta-D-manno-heptose 7-phosphate: step 4/4. In terms of biological role, catalyzes the interconversion between ADP-D-glycero-beta-D-manno-heptose and ADP-L-glycero-beta-D-manno-heptose via an epimerization at carbon 6 of the heptose. The sequence is that of ADP-L-glycero-D-manno-heptose-6-epimerase from Escherichia coli (strain SMS-3-5 / SECEC).